Consider the following 231-residue polypeptide: TATA-box-binding protein (231 aa).

2 consecutive repeat copies span residues 58 to 134 (LQNI…ARII) and 148 to 225 (IQNI…YPVL).

This sequence belongs to the TBP family. As to quaternary structure, belongs to the TFIID complex together with the TBP-associated factors (TAFs). Binds DNA as monomer.

It is found in the nucleus. General transcription factor that functions at the core of the DNA-binding multiprotein factor TFIID. Binding of TFIID to the TATA box is the initial transcriptional step of the pre-initiation complex (PIC), playing a role in the activation of eukaryotic genes transcribed by RNA polymerase II. The protein is TATA-box-binding protein (tbp1) of Schizosaccharomyces pombe (strain 972 / ATCC 24843) (Fission yeast).